The chain runs to 235 residues: Ubiquinone biosynthesis O-methyltransferase (235 aa).

Residues arginine 39, glycine 59, aspartate 80, and methionine 124 each contribute to the S-adenosyl-L-methionine site.

It belongs to the methyltransferase superfamily. UbiG/COQ3 family.

The catalysed reaction is a 3-demethylubiquinol + S-adenosyl-L-methionine = a ubiquinol + S-adenosyl-L-homocysteine + H(+). The enzyme catalyses a 3-(all-trans-polyprenyl)benzene-1,2-diol + S-adenosyl-L-methionine = a 2-methoxy-6-(all-trans-polyprenyl)phenol + S-adenosyl-L-homocysteine + H(+). It participates in cofactor biosynthesis; ubiquinone biosynthesis. Its function is as follows. O-methyltransferase that catalyzes the 2 O-methylation steps in the ubiquinone biosynthetic pathway. In Vibrio parahaemolyticus serotype O3:K6 (strain RIMD 2210633), this protein is Ubiquinone biosynthesis O-methyltransferase.